A 174-amino-acid polypeptide reads, in one-letter code: Small ribosomal subunit protein uS5 (174 aa).

The region spanning 20–83 is the S5 DRBM domain; that stretch reads IEDQLVAINR…EAGKKRMIKV (64 aa).

It belongs to the universal ribosomal protein uS5 family. In terms of assembly, part of the 30S ribosomal subunit. Contacts proteins S4 and S8.

With S4 and S12 plays an important role in translational accuracy. Its function is as follows. Located at the back of the 30S subunit body where it stabilizes the conformation of the head with respect to the body. In Lactobacillus gasseri (strain ATCC 33323 / DSM 20243 / BCRC 14619 / CIP 102991 / JCM 1131 / KCTC 3163 / NCIMB 11718 / NCTC 13722 / AM63), this protein is Small ribosomal subunit protein uS5.